The sequence spans 899 residues: MSSLYAPTDEVKRRLRPFGLFFEKSLKDLIKGIRSQQSPEQLHEFLTRVLSECREEVKHADFNMKTNAVLKLTYLEMYGFDMSWANFHVLEVMSSTRFQQKRVGYLAASQSFYKDHDILMLATNLLRKDLKYSLSNETVRMGVALSGLSAMVTPELARDICEDLFLMLHSTKPYIRKKAVTALFKVFLQYPEGLRDNFEKFVDRLEDDDLSVVSATVSVICELSKHNPQPFIQLSPILYQMLIKVDNNWVIIRLLKLFTNLAQIEPKLRVKILPNVLELMDSTTAISVVYESINCIVKGNMLNSDDYDSAVACLDKLHDFCTSNDPNLRYLSCVLFYKIGKINTDFIANFDVLILRLLVDVDVSIRSKTLELLEGIVTEDNLVDFVQRLLKQFVDVDKICVNDQEFSIDIPEYYKSKMIHAICKITAMKNYANVTDFEWYIALLSDLCIVSQDLQDKTLAQKLGEQIRNIMVKVPDLRDRTLAQIVQLVKSEDITARLPGVLKECIWCLGEYSSLLDNKDEYILLLAENSKLYEPELQQTLIPAILKIYSNWCNESVVDTGRIKWVTERIITPLEDLIISKNFEVQERSSEALEFLRLCLDSLSEDASDSLPLLLTEVLPSFFNAFELQPITSGTQRKLQQSISVDCDTPFLTESELEQLLADDTSVDGIVSPDVSDTESDSEMYVPGAAPKDKGSSPTHELTTAELEAINERRKQERVGNPFYLDDADVGSVKKVDILDNLSNSKPSSSGSLVRLSSESKAKEKKKKVKVRVISDAVIVDGVNTADVTDDRPSNTPSARNKIALQLKNKLDSFDFTKPRDEGDYDPDVDLQKLREKFAQQRLLDESAAAEEEVVVVKKKKRSKDGSKSSKKKSRSKSKPSSKGGDTAEAELLPGLTTE.

12 HEAT repeats span residues 37 to 74, 155 to 192, 194 to 229, 231 to 267, 268 to 305, 308 to 344, 345 to 382, 384 to 428, 480 to 518, 536 to 580, 590 to 613, and 614 to 656; these read QSPE…KLTY, ELAR…QYPE, LRDN…HNPQ, FIQL…IEPK, LRVK…LNSD, DSAV…KINT, DFIA…EDNL, DFVQ…ITAM, RTLA…LLDN, ELQQ…LIIS, SEAL…SLPL, and LLTE…TESE. Disordered regions lie at residues 668–701, 741–768, 782–801, and 849–899; these read DGIV…PTHE, NLSN…KKKK, GVNT…SARN, and AAEE…LTTE. A compositionally biased stretch (low complexity) spans 743–759; that stretch reads SNSKPSSSGSLVRLSSE. Positions 841-862 form a coiled coil; that stretch reads QRLLDESAAAEEEVVVVKKKKR. A compositionally biased stretch (basic residues) spans 857-880; sequence VKKKKRSKDGSKSSKKKSRSKSKP.

Belongs to the adaptor complexes large subunit family. Adaptor protein complex 3 (AP-3) is a heterotetramer composed of 2 large adaptins (APL5 and APL6), a medium adaptin (APM3) and a small adaptin (APS3).

It localises to the golgi apparatus. Its subcellular location is the cytoplasmic vesicle. It is found in the clathrin-coated vesicle membrane. Part of the AP-3 complex, an adaptor-related complex which is not clathrin-associated. The complex is associated with the Golgi region as well as more peripheral structures. It facilitates the budding of vesicles from the Golgi membrane and may be directly involved in trafficking to the vacuole. This is AP-3 complex subunit delta (APL5) from Eremothecium gossypii (strain ATCC 10895 / CBS 109.51 / FGSC 9923 / NRRL Y-1056) (Yeast).